Reading from the N-terminus, the 445-residue chain is 2-oxoisovalerate dehydrogenase subunit alpha, mitochondrial (445 aa).

Residues 1–45 (MAVAIAAARVWRPNRGLSQAALLLLWRPGARGLARSHPHRQQQQF) constitute a mitochondrion transit peptide. Residues Tyr-158 and Arg-159 each coordinate thiamine diphosphate. K(+) is bound at residue Ser-206. Ser-207 contacts thiamine diphosphate. The K(+) site is built by Pro-208, Thr-211, and Gln-212. Glu-238 contacts Mg(2+). Thiamine diphosphate-binding residues include Gly-239, Ala-240, and Arg-265. 2 residues coordinate Mg(2+): Asn-267 and Tyr-269. His-336 contacts thiamine diphosphate. Residue Ser-337 is modified to Phosphoserine; by BCKDK. Thr-338 bears the Phosphothreonine mark. Phosphoserine occurs at positions 339 and 347. Lys-356 bears the N6-acetyllysine; alternate mark. Residue Lys-356 is modified to N6-succinyllysine; alternate. Residue Lys-380 is modified to N6-succinyllysine.

The protein belongs to the BCKDHA family. As to quaternary structure, heterotetramer of 2 alpha/BCKDHA and 2 beta chains/BCKDHB that forms the branched-chain alpha-keto acid decarboxylase (E1) component of the BCKD complex. The branched-chain alpha-ketoacid dehydrogenase is a large complex composed of three major building blocks E1, E2 and E3. It is organized around E2, a 24-meric cubic core composed of DBT, to which are associated 6 to 12 copies of E1, and approximately 6 copies of the dehydrogenase E3, a DLD dimer. Interacts with PPM1K. The cofactor is thiamine diphosphate. Mg(2+) is required as a cofactor. In terms of processing, phosphorylated at Ser-337 by BCKDK and dephosphorylated by protein phosphatase PPM1K.

The protein localises to the mitochondrion matrix. It catalyses the reaction N(6)-[(R)-lipoyl]-L-lysyl-[protein] + 3-methyl-2-oxobutanoate + H(+) = N(6)-[(R)-S(8)-2-methylpropanoyldihydrolipoyl]-L-lysyl-[protein] + CO2. Its function is as follows. Together with BCKDHB forms the heterotetrameric E1 subunit of the mitochondrial branched-chain alpha-ketoacid dehydrogenase (BCKD) complex. The BCKD complex catalyzes the multi-step oxidative decarboxylation of alpha-ketoacids derived from the branched-chain amino-acids valine, leucine and isoleucine producing CO2 and acyl-CoA which is subsequently utilized to produce energy. The E1 subunit catalyzes the first step with the decarboxylation of the alpha-ketoacid forming an enzyme-product intermediate. A reductive acylation mediated by the lipoylamide cofactor of E2 extracts the acyl group from the E1 active site for the next step of the reaction. This Macaca fascicularis (Crab-eating macaque) protein is 2-oxoisovalerate dehydrogenase subunit alpha, mitochondrial (BCKDHA).